We begin with the raw amino-acid sequence, 131 residues long: Profilin (131 aa).

The protein belongs to the profilin family. As to quaternary structure, occurs in many kinds of cells as a complex with monomeric actin in a 1:1 ratio.

The protein localises to the cytoplasm. It localises to the cytoskeleton. Functionally, binds to actin and affects the structure of the cytoskeleton. At high concentrations, profilin prevents the polymerization of actin, whereas it enhances it at low concentrations. By binding to PIP2, it inhibits the formation of IP3 and DG. This chain is Profilin, found in Arachis hypogaea (Peanut).